Reading from the N-terminus, the 808-residue chain is Anaphase-promoting complex subunit 4 (808 aa).

Tyrosine 469 is modified (phosphotyrosine). Residues serine 757 and serine 758 each carry the phosphoserine modification. Residue lysine 772 forms a Glycyl lysine isopeptide (Lys-Gly) (interchain with G-Cter in SUMO2) linkage. Serine 777 and serine 779 each carry phosphoserine. A Glycyl lysine isopeptide (Lys-Gly) (interchain with G-Cter in SUMO2) cross-link involves residue lysine 798.

Belongs to the APC4 family. The mammalian APC/C is composed at least of 14 distinct subunits ANAPC1, ANAPC2, CDC27/APC3, ANAPC4, ANAPC5, CDC16/APC6, ANAPC7, CDC23/APC8, ANAPC10, ANAPC11, CDC26/APC12, ANAPC13, ANAPC15 and ANAPC16 that assemble into a complex of at least 19 chains with a combined molecular mass of around 1.2 MDa; APC/C interacts with FZR1 and FBXO5. In the context of the APC/C complex, directly interacts with UBE2S. Interacts with FBXO43.

It localises to the nucleus. The protein operates within protein modification; protein ubiquitination. Its function is as follows. Component of the anaphase promoting complex/cyclosome (APC/C), a cell cycle-regulated E3 ubiquitin ligase that controls progression through mitosis and the G1 phase of the cell cycle. The APC/C complex acts by mediating ubiquitination and subsequent degradation of target proteins: it mainly mediates the formation of 'Lys-11'-linked polyubiquitin chains and, to a lower extent, the formation of 'Lys-48'- and 'Lys-63'-linked polyubiquitin chains. The APC/C complex catalyzes assembly of branched 'Lys-11'-/'Lys-48'-linked branched ubiquitin chains on target proteins. In Homo sapiens (Human), this protein is Anaphase-promoting complex subunit 4 (ANAPC4).